The primary structure comprises 284 residues: Acetylglutamate kinase (284 aa).

Substrate is bound by residues 64–65, Arg86, and Asn179; that span reads GG.

The protein belongs to the acetylglutamate kinase family. ArgB subfamily.

The protein localises to the cytoplasm. The catalysed reaction is N-acetyl-L-glutamate + ATP = N-acetyl-L-glutamyl 5-phosphate + ADP. It functions in the pathway amino-acid biosynthesis; L-arginine biosynthesis; N(2)-acetyl-L-ornithine from L-glutamate: step 2/4. Its function is as follows. Catalyzes the ATP-dependent phosphorylation of N-acetyl-L-glutamate. In Prochlorococcus marinus subsp. pastoris (strain CCMP1986 / NIES-2087 / MED4), this protein is Acetylglutamate kinase.